Consider the following 478-residue polypeptide: Serine carboxypeptidase-like 33 (478 aa).

The signal sequence occupies residues 1-33 (MNLTLPMKKQKFLLIISLLILLSLLHQDYHIEA). 3 cysteine pairs are disulfide-bonded: Cys95/Cys361, Cys257/Cys268, and Cys292/Cys330. 2 N-linked (GlcNAc...) asparagine glycosylation sites follow: Asn114 and Asn146. Ser188 is a catalytic residue. N-linked (GlcNAc...) asparagine glycans are attached at residues Asn263, Asn295, and Asn362. Residues Asp398 and His451 contribute to the active site.

Belongs to the peptidase S10 family. As to expression, expressed in senescent leaves and flowers.

The protein localises to the secreted. Its function is as follows. Probable carboxypeptidase. In Arabidopsis thaliana (Mouse-ear cress), this protein is Serine carboxypeptidase-like 33 (SCPL33).